The following is a 459-amino-acid chain: Cysteine--tRNA ligase (459 aa).

Cys28 is a Zn(2+) binding site. Positions 30-40 (VTIYDLCHIGH) match the 'HIGH' region motif. Zn(2+)-binding residues include Cys209, His234, and Glu238. The 'KMSKS' region signature appears at 266–270 (KMSKS). Residue Lys269 participates in ATP binding.

The protein belongs to the class-I aminoacyl-tRNA synthetase family. As to quaternary structure, monomer. It depends on Zn(2+) as a cofactor.

The protein resides in the cytoplasm. The catalysed reaction is tRNA(Cys) + L-cysteine + ATP = L-cysteinyl-tRNA(Cys) + AMP + diphosphate. This is Cysteine--tRNA ligase from Shewanella baltica (strain OS195).